The primary structure comprises 197 residues: Histocompatibility antigen 60c (197 aa).

The signal sequence occupies residues 1–17 (MALLLLILESCSAGTYA). Residues asparagine 51, asparagine 81, and asparagine 114 are each glycosylated (N-linked (GlcNAc...) asparagine). Serine 177 carries the GPI-anchor amidated serine lipid modification. The propeptide at 178–197 (MACKSSPFDGLIMILLIYIL) is removed in mature form.

The protein belongs to the NKG2D ligand family. In terms of tissue distribution, expressed in skin, and weakly in large intestine.

It localises to the cell membrane. In terms of biological role, ligand for the KLRK1 immunosurveillance receptor. Binding to KLRK1 stimulates cell lysis in vitro. This is Histocompatibility antigen 60c from Mus musculus (Mouse).